The following is a 333-amino-acid chain: NADH dehydrogenase (ubiquinone) complex I, assembly factor 6 (333 aa).

The transit peptide at 1-44 (MAASAHGSVWGPLRLGIPGLCCRRPPLGLYARMRRLPGPEVSGR) directs the protein to the mitochondrion.

The protein belongs to the NDUFAF6 family. Widely expressed. A lower expression is observed in lung and kidney compared to heart, muscle and liver. In the kidney, expression is high in the basal zone of the proximal tubular cells.

The protein resides in the mitochondrion inner membrane. Its subcellular location is the cytoplasm. It localises to the nucleus. In terms of biological role, involved in the assembly of mitochondrial NADH:ubiquinone oxidoreductase complex (complex I) at early stages. May play a role in the biogenesis of complex I subunit MT-ND1. This Homo sapiens (Human) protein is NADH dehydrogenase (ubiquinone) complex I, assembly factor 6 (NDUFAF6).